The primary structure comprises 204 residues: Refilin-A (204 aa).

The tract at residues 1 to 52 (MVGHLHLQAMGDTREQSRDGLLDSPDSGLPPSPSPSPPFYALSPGTLDTRTT) is disordered. The span at 12-21 (DTREQSRDGL) shows a compositional bias: basic and acidic residues. Positions 28 to 38 (GLPPSPSPSPP) are enriched in pro residues. An Asymmetric dimethylarginine modification is found at R151.

The protein belongs to the Refilin family. In terms of assembly, interacts with FLNA and FLNB. In terms of tissue distribution, detected in various tissues, with highest expression in lung, followed by spleen.

The protein resides in the cytoplasm. The protein localises to the cytoskeleton. Its function is as follows. Involved in the regulation of the perinuclear actin network and nuclear shape through interaction with filamins. Plays an essential role in the formation of cartilaginous skeletal elements. The chain is Refilin-A (Rflna) from Mus musculus (Mouse).